Reading from the N-terminus, the 1454-residue chain is Probable cleavage and polyadenylation specificity factor subunit 1 (1454 aa).

A disordered region spans residues 736-765 (KQSNTRKRKRLGHDAIQSSRGGEQSDAIDP).

Belongs to the CPSF1 family. In terms of assembly, CPSF is a heterotetramer composed of four distinct subunits 160 (cpsf-1), 100 (cpsf-2), 70 (cpsf-3), and 30 kDa (cpsf-4).

The protein resides in the nucleus. Its function is as follows. CPSF plays a key role in pre-mRNA 3'-end formation, recognizing the AAUAAA signal sequence and interacting with poly(A)polymerase and other factors to bring about cleavage and poly(A) addition. This subunit is involved in the RNA recognition step of the polyadenylation reaction. This is Probable cleavage and polyadenylation specificity factor subunit 1 (cpsf-1) from Caenorhabditis elegans.